Here is a 207-residue protein sequence, read N- to C-terminus: Dephospho-CoA kinase (207 aa).

Positions 4-203 (VIGLTGGIAS…EEGYIEKPNY (200 aa)) constitute a DPCK domain. 12–17 (ASGKST) serves as a coordination point for ATP.

It belongs to the CoaE family.

The protein localises to the cytoplasm. The enzyme catalyses 3'-dephospho-CoA + ATP = ADP + CoA + H(+). It participates in cofactor biosynthesis; coenzyme A biosynthesis; CoA from (R)-pantothenate: step 5/5. In terms of biological role, catalyzes the phosphorylation of the 3'-hydroxyl group of dephosphocoenzyme A to form coenzyme A. In Staphylococcus aureus (strain MRSA252), this protein is Dephospho-CoA kinase.